Consider the following 172-residue polypeptide: Adenine phosphoribosyltransferase (172 aa).

Belongs to the purine/pyrimidine phosphoribosyltransferase family. Homodimer.

It localises to the cytoplasm. It carries out the reaction AMP + diphosphate = 5-phospho-alpha-D-ribose 1-diphosphate + adenine. It participates in purine metabolism; AMP biosynthesis via salvage pathway; AMP from adenine: step 1/1. Catalyzes a salvage reaction resulting in the formation of AMP, that is energically less costly than de novo synthesis. The protein is Adenine phosphoribosyltransferase of Trichormus variabilis (strain ATCC 29413 / PCC 7937) (Anabaena variabilis).